The primary structure comprises 562 residues: Arginine--tRNA ligase (562 aa).

Positions Pro122–His132 match the 'HIGH' region motif.

This sequence belongs to the class-I aminoacyl-tRNA synthetase family. Monomer.

It is found in the cytoplasm. The enzyme catalyses tRNA(Arg) + L-arginine + ATP = L-arginyl-tRNA(Arg) + AMP + diphosphate. This chain is Arginine--tRNA ligase, found in Chlamydia felis (strain Fe/C-56) (Chlamydophila felis).